Here is a 272-residue protein sequence, read N- to C-terminus: MNRIDKTLEKLKANRKKMLSPYITAGDPYPELTVSLMHQLVKSGADVLELGIPFSDPMAEGPVIQRAMERALAHSIHCDDVLNMVRQFRKTDTETPVILMGYLNPIEQYGYDLFAQQAVEAGADGTILVDLPPEEADGVSRVWQKHGLYSIYLCSPTTSAERMNFINQHANGYLYYVSLKGVTGSDALKLPELKAQYLQRKAQSKLPLMVGFGIKTPEMAAQVAEFADGVIVGAALINEIIEAYEAKKDPLQASGALLSSMRQAIDNIGSMV.

Active-site proton acceptor residues include Glu49 and Glu60.

The protein belongs to the TrpA family. Tetramer of two alpha and two beta chains.

The catalysed reaction is (1S,2R)-1-C-(indol-3-yl)glycerol 3-phosphate + L-serine = D-glyceraldehyde 3-phosphate + L-tryptophan + H2O. Its pathway is amino-acid biosynthesis; L-tryptophan biosynthesis; L-tryptophan from chorismate: step 5/5. Its function is as follows. The alpha subunit is responsible for the aldol cleavage of indoleglycerol phosphate to indole and glyceraldehyde 3-phosphate. This Legionella pneumophila (strain Paris) protein is Tryptophan synthase alpha chain.